Here is a 541-residue protein sequence, read N- to C-terminus: Catalase (541 aa).

The interval 1 to 20 is disordered; the sequence is MPQTKGKPHEEQLEQYKNSQ. Catalysis depends on residues His74 and Asn147. Position 357 (Tyr357) interacts with heme.

The protein belongs to the catalase family. The cofactor is heme.

The protein localises to the peroxisome matrix. The enzyme catalyses 2 H2O2 = O2 + 2 H2O. Its function is as follows. Catalyzes the degradation of hydrogen peroxide (H(2)O(2)) generated by peroxisomal oxidases to water and oxygen, thereby protecting cells from the toxic effects of hydrogen peroxide. The protein is Catalase (CAT) of Ascaris suum (Pig roundworm).